The primary structure comprises 112 residues: Ribonuclease P protein component (112 aa).

Belongs to the RnpA family. Consists of a catalytic RNA component (M1 or rnpB) and a protein subunit.

It catalyses the reaction Endonucleolytic cleavage of RNA, removing 5'-extranucleotides from tRNA precursor.. RNaseP catalyzes the removal of the 5'-leader sequence from pre-tRNA to produce the mature 5'-terminus. It can also cleave other RNA substrates such as 4.5S RNA. The protein component plays an auxiliary but essential role in vivo by binding to the 5'-leader sequence and broadening the substrate specificity of the ribozyme. The chain is Ribonuclease P protein component from Pelotomaculum thermopropionicum (strain DSM 13744 / JCM 10971 / SI).